A 274-amino-acid chain; its full sequence is MPFRSNNPITRDELLSRFFPQFHPVTTFNSGLSGGSFLIEHQGQRFVVRQPHDPDAPQSAFLRQYRALSQLPASIAPKPHLYLRDWMVVDYLPGAVKTYLPDTNELAGLLYYLHQQPRFGWRITLLPLLELYWQQSDPARRTVGWLRMLKRLRKAREPRPLRLSPLHMDVHAGNLVHSASGLKLIDWEYAGDGDTALELAAVWVENTEQHRQLVNDYATRAKIYPAQLWRQVRRWFPWLLMLKAGWFEYRWRQTGDQQFIRLADDTWRQLLIKQ.

This sequence belongs to the thiamine kinase family.

It catalyses the reaction thiamine + ATP = thiamine phosphate + ADP + H(+). It functions in the pathway cofactor biosynthesis; thiamine diphosphate biosynthesis; thiamine phosphate from thiamine: step 1/1. Functionally, catalyzes the ATP-dependent phosphorylation of thiamine to thiamine phosphate. Is involved in thiamine salvage. This Shigella boydii serotype 4 (strain Sb227) protein is Thiamine kinase.